The following is a 491-amino-acid chain: MANYFNTLNLRQQLAQLGKCRFMGRDEFADGASYLQGKKVVIVGCGAQGLNQGLNMRDSGLDIAYALRKEAIAEKRASWRKATENGFKVGTYEELIPQADLVVNLTPDKQHSDVVRSVQPLMKDGAALGYSHGFNIVEVGEQIRKDITVVMVAPKCPGTEVREEYKRGFGVPTLIAVHPENDPKGEGMAIAKAWAAATGGHRAGVLESSFVAEVKSDLMGEQTILCGMLQAGSLLCFDKLVAEGTDPAYAEKLIQFGWETITEALKQGGITLMMDRLSNPAKLRAYALSEQLKEIMTPLFQKHMDDIISGEFSSGMMADWANDDKKLLTWREETGKTAFETAPQFEGKIGEQEYFDKGVLMIAMVKAGVELAFETMVDSGIIEESAYYESLHELPLIANTIARKRLYEMNVVISDTAEYGNYLFSYACVPLLKPFMAELQPGDLGSAIPEGAVDNAQLRDVNDAIRSHAIEQVGKKLRGYMTDMKRIAVAG.

A KARI N-terminal Rossmann domain is found at Ala-15–Ser-208. NADP(+)-binding positions include Cys-45 to Gln-48, Arg-68, Arg-76, Ser-78, and Asp-108 to Gln-110. Residue His-132 is part of the active site. Residue Gly-158 participates in NADP(+) binding. KARI C-terminal knotted domains are found at residues Ser-209 to Gln-344 and Phe-345 to Met-484. 4 residues coordinate Mg(2+): Asp-217, Glu-221, Glu-389, and Glu-393. Ser-414 contacts substrate.

This sequence belongs to the ketol-acid reductoisomerase family. It depends on Mg(2+) as a cofactor.

The catalysed reaction is (2R)-2,3-dihydroxy-3-methylbutanoate + NADP(+) = (2S)-2-acetolactate + NADPH + H(+). The enzyme catalyses (2R,3R)-2,3-dihydroxy-3-methylpentanoate + NADP(+) = (S)-2-ethyl-2-hydroxy-3-oxobutanoate + NADPH + H(+). Its pathway is amino-acid biosynthesis; L-isoleucine biosynthesis; L-isoleucine from 2-oxobutanoate: step 2/4. It functions in the pathway amino-acid biosynthesis; L-valine biosynthesis; L-valine from pyruvate: step 2/4. Functionally, involved in the biosynthesis of branched-chain amino acids (BCAA). Catalyzes an alkyl-migration followed by a ketol-acid reduction of (S)-2-acetolactate (S2AL) to yield (R)-2,3-dihydroxy-isovalerate. In the isomerase reaction, S2AL is rearranged via a Mg-dependent methyl migration to produce 3-hydroxy-3-methyl-2-ketobutyrate (HMKB). In the reductase reaction, this 2-ketoacid undergoes a metal-dependent reduction by NADPH to yield (R)-2,3-dihydroxy-isovalerate. This is Ketol-acid reductoisomerase (NADP(+)) from Salmonella heidelberg (strain SL476).